An 814-amino-acid chain; its full sequence is Probable G-protein coupled receptor 156 (814 aa).

Residues 1-47 lie on the Extracellular side of the membrane; sequence MEPEINCSELCDSFPGQELDRRPLHDLCKTTITSSHHSSKTISSLSP. Asn-6 carries an N-linked (GlcNAc...) asparagine glycan. The helical transmembrane segment at 48–68 threads the bilayer; the sequence is VLLGIVWTFLSCGLLLILFFL. Topologically, residues 69-86 are cytoplasmic; that stretch reads AFTIHCRKNRIVKMSSPN. A helical transmembrane segment spans residues 87 to 107; it reads LNIVTLLGSCLTYSSAYLFGI. At 108 to 118 the chain is on the extracellular side; it reads QDVLVGSSMET. A helical membrane pass occupies residues 119 to 139; it reads LIQTRLSMLCIGTSLVFGPIL. Residues 140–164 are Cytoplasmic-facing; the sequence is GKSWRLYKVFTQRVPDKRVIIKDLQ. Residues 165-185 traverse the membrane as a helical segment; it reads LLGLVAALLMADVILLMTWVL. Residues 186 to 222 lie on the Extracellular side of the membrane; sequence TDPIQCLQILSVSMTVTGKDVSCTSTSTHFCASRYSD. A helical transmembrane segment spans residues 223-243; that stretch reads VWIALIWGCKGLLLLYGAYLA. The Cytoplasmic segment spans residues 244–257; sequence GLTGHVSSPPVNQS. The chain crosses the membrane as a helical span at residues 258-278; that stretch reads LTIMVGVNLLVLAAGLLFVVT. Residues 279 to 288 are Extracellular-facing; sequence RYLHSWPNLV. Residues 289 to 309 traverse the membrane as a helical segment; sequence FGLTSGGIFVCTTTINCFIFI. Topologically, residues 310-814 are cytoplasmic; it reads PQLKQWKAFE…FKDDLKPTLV (505 aa). Residues 354–390 are a coiled coil; that stretch reads EKSSMERLLTEKNAVIESLQEQVNNAKEKIVRLMSAE. Disordered stretches follow at residues 422–545, 557–724, and 769–792; these read AQGP…SSVI, GLGP…PEQW, and SSSDSSDSGTSDTDPEPTGGLASW. A compositionally biased stretch (polar residues) spans 443 to 454; it reads SQCTSGPSSYAQ. Basic and acidic residues predominate over residues 468–484; it reads GKEEKISDSKDFSDHLD. Positions 486–496 are enriched in polar residues; that stretch reads GCSQKPWTEQS. The span at 523 to 545 shows a compositional bias: basic and acidic residues; sequence QRQRHLENSEEPPERRSRVSSVI. The segment covering 563–581 has biased composition (polar residues); it reads SLSTAPSCHQQTWKNSAAF. Residues 599 to 610 are compositionally biased toward basic residues; it reads VRRRRAAQRARS. A compositionally biased stretch (polar residues) spans 639 to 651; sequence NGDSPSLAPQTTD. The span at 769–780 shows a compositional bias: low complexity; that stretch reads SSSDSSDSGTSD.

This sequence belongs to the G-protein coupled receptor 3 family. GABA-B receptor subfamily. As to expression, ubiquitous expression both in the CNS and in peripheral tissues. Very high expression in fetal brain and testis relative to expression in other tissues.

Its subcellular location is the cell membrane. Orphan G-protein coupled receptor involved in the regulation of hair cell orientation in mechanosensory organs of the inner ear. It is required to trigger a 180 degree reversal in hair cell orientation, creating a virtual line of polarity reversal (LPR) across which stereociliary bundles are arranged in opposite orientations. This is Probable G-protein coupled receptor 156 (GPR156) from Homo sapiens (Human).